Here is a 452-residue protein sequence, read N- to C-terminus: Bifunctional protein GlmU (452 aa).

Residues 1–232 (MTARNSLTIV…EDEVRGINTK (232 aa)) form a pyrophosphorylase region. UDP-N-acetyl-alpha-D-glucosamine is bound by residues 11–14 (LAAG), lysine 25, glutamine 78, and 83–84 (GT). Mg(2+) is bound at residue aspartate 108. UDP-N-acetyl-alpha-D-glucosamine contacts are provided by glycine 144, glutamate 158, asparagine 173, and asparagine 230. Asparagine 230 serves as a coordination point for Mg(2+). The tract at residues 233 to 253 (AQLAEAETVMQTRLRLAAMAA) is linker. The N-acetyltransferase stretch occupies residues 254 to 452 (GVTLIAPETV…KSRHRKPKAH (199 aa)). Positions 319 and 337 each coordinate UDP-N-acetyl-alpha-D-glucosamine. Histidine 349 (proton acceptor) is an active-site residue. Residues tyrosine 352 and asparagine 363 each coordinate UDP-N-acetyl-alpha-D-glucosamine. Residues alanine 366, 372–373 (NY), serine 391, serine 409, and arginine 426 each bind acetyl-CoA.

It in the N-terminal section; belongs to the N-acetylglucosamine-1-phosphate uridyltransferase family. This sequence in the C-terminal section; belongs to the transferase hexapeptide repeat family. As to quaternary structure, homotrimer. Mg(2+) is required as a cofactor.

The protein resides in the cytoplasm. It carries out the reaction alpha-D-glucosamine 1-phosphate + acetyl-CoA = N-acetyl-alpha-D-glucosamine 1-phosphate + CoA + H(+). The enzyme catalyses N-acetyl-alpha-D-glucosamine 1-phosphate + UTP + H(+) = UDP-N-acetyl-alpha-D-glucosamine + diphosphate. It functions in the pathway nucleotide-sugar biosynthesis; UDP-N-acetyl-alpha-D-glucosamine biosynthesis; N-acetyl-alpha-D-glucosamine 1-phosphate from alpha-D-glucosamine 6-phosphate (route II): step 2/2. The protein operates within nucleotide-sugar biosynthesis; UDP-N-acetyl-alpha-D-glucosamine biosynthesis; UDP-N-acetyl-alpha-D-glucosamine from N-acetyl-alpha-D-glucosamine 1-phosphate: step 1/1. Its pathway is bacterial outer membrane biogenesis; LPS lipid A biosynthesis. Functionally, catalyzes the last two sequential reactions in the de novo biosynthetic pathway for UDP-N-acetylglucosamine (UDP-GlcNAc). The C-terminal domain catalyzes the transfer of acetyl group from acetyl coenzyme A to glucosamine-1-phosphate (GlcN-1-P) to produce N-acetylglucosamine-1-phosphate (GlcNAc-1-P), which is converted into UDP-GlcNAc by the transfer of uridine 5-monophosphate (from uridine 5-triphosphate), a reaction catalyzed by the N-terminal domain. The polypeptide is Bifunctional protein GlmU (Rhodopseudomonas palustris (strain TIE-1)).